The chain runs to 301 residues: MSLAVEAVKDFLLKLQDDICEALEAEDGQATFVEDKWTREGGGGGRTRVMVDGAVIEKGGVNFSHVYGKGLPMSSTERHPDIAGCNFEAMGVSLVIHPKNPHVPTSHANVRLFVAEREGKEPVWWFGGGFDLTPYYAVEEDCRDFHQVAQDLCKPFGADVYARFKGWCDEYFFIPYRNEARGIGGLFFDDLNEWPFEKCFEFVQAVGKGYMDAYIPIVNRRKNTPYTEQQVEFQEFRRGRYAEFNLVIDRGTKFGLQSGGRTESILISLPPRARWGYNWQPEPGTPEARLTEYFLTKRQWV.

The tract at residues 49–58 (VMVDGAVIEK) is important for dimerization. S93 contributes to the substrate binding site. H107 acts as the Proton donor in catalysis. Substrate is bound by residues 109 to 111 (NVR) and 259 to 261 (GGR). The tract at residues 241–276 (YAEFNLVIDRGTKFGLQSGGRTESILISLPPRARWG) is important for dimerization.

This sequence belongs to the aerobic coproporphyrinogen-III oxidase family. In terms of assembly, homodimer.

Its subcellular location is the cytoplasm. It catalyses the reaction coproporphyrinogen III + O2 + 2 H(+) = protoporphyrinogen IX + 2 CO2 + 2 H2O. Its pathway is porphyrin-containing compound metabolism; protoporphyrin-IX biosynthesis; protoporphyrinogen-IX from coproporphyrinogen-III (O2 route): step 1/1. Functionally, involved in the heme biosynthesis. Catalyzes the aerobic oxidative decarboxylation of propionate groups of rings A and B of coproporphyrinogen-III to yield the vinyl groups in protoporphyrinogen-IX. In Leishmania major, this protein is Oxygen-dependent coproporphyrinogen-III oxidase.